A 137-amino-acid chain; its full sequence is Small ribosomal subunit protein uS11 (137 aa).

The span at 1 to 11 shows a compositional bias: polar residues; that stretch reads MPPKSRSTGPK. 2 disordered regions span residues 1-28 and 117-137; these read MPPK…PHGA and TISD…RRRV. Basic residues predominate over residues 12 to 21; that stretch reads KTQKARRRDK.

The protein belongs to the universal ribosomal protein uS11 family. In terms of assembly, part of the 30S ribosomal subunit. Interacts with proteins S7 and S18. Binds to IF-3.

Located on the platform of the 30S subunit, it bridges several disparate RNA helices of the 16S rRNA. Forms part of the Shine-Dalgarno cleft in the 70S ribosome. This is Small ribosomal subunit protein uS11 from Rhodococcus opacus (strain B4).